The chain runs to 307 residues: Glycine--tRNA ligase alpha subunit (307 aa).

This sequence belongs to the class-II aminoacyl-tRNA synthetase family. Tetramer of two alpha and two beta subunits.

The protein localises to the cytoplasm. It catalyses the reaction tRNA(Gly) + glycine + ATP = glycyl-tRNA(Gly) + AMP + diphosphate. The sequence is that of Glycine--tRNA ligase alpha subunit from Levilactobacillus brevis (strain ATCC 367 / BCRC 12310 / CIP 105137 / JCM 1170 / LMG 11437 / NCIMB 947 / NCTC 947) (Lactobacillus brevis).